The primary structure comprises 50 residues: Bacteriocin-like protein SboX (50 aa).

The polypeptide is Bacteriocin-like protein SboX (sboX) (Bacillus subtilis (strain 168)).